A 151-amino-acid chain; its full sequence is Small ribosomal subunit protein uS15 (151 aa).

The segment at 1-20 (MARLHSGKRGSSGSTKPLRT) is disordered.

Belongs to the universal ribosomal protein uS15 family. In terms of assembly, part of the 30S ribosomal subunit.

The protein is Small ribosomal subunit protein uS15 of Methanococcus vannielii (strain ATCC 35089 / DSM 1224 / JCM 13029 / OCM 148 / SB).